A 361-amino-acid chain; its full sequence is Phospho-N-acetylmuramoyl-pentapeptide-transferase (361 aa).

A run of 10 helical transmembrane segments spans residues 25–45 (RGILAALTALFLSLWMGPAVI), 73–93 (TMGGSLILLTVTLSVLLWGDL), 98–118 (VWLVLAVMICFGAIGWYDDWI), 139–159 (IFGLAAGLFLYYTADVPAAIT), 168–188 (IALPLVGVSFVVIAYFWIVGF), 200–220 (GLAIMPTVLVACALGVFAYAS), 237–257 (AGELIIICSAIAGAGLGFLWF), 264–284 (VFMGDIGALSLGAVLGTIAVI), 289–309 (MVLVIMGGVFVIETLSVIIQV), and 339–359 (VIVRFWIISVVLVLIGLATLK).

Belongs to the glycosyltransferase 4 family. MraY subfamily. Mg(2+) serves as cofactor.

It is found in the cell inner membrane. It carries out the reaction UDP-N-acetyl-alpha-D-muramoyl-L-alanyl-gamma-D-glutamyl-meso-2,6-diaminopimeloyl-D-alanyl-D-alanine + di-trans,octa-cis-undecaprenyl phosphate = di-trans,octa-cis-undecaprenyl diphospho-N-acetyl-alpha-D-muramoyl-L-alanyl-D-glutamyl-meso-2,6-diaminopimeloyl-D-alanyl-D-alanine + UMP. The protein operates within cell wall biogenesis; peptidoglycan biosynthesis. Its function is as follows. Catalyzes the initial step of the lipid cycle reactions in the biosynthesis of the cell wall peptidoglycan: transfers peptidoglycan precursor phospho-MurNAc-pentapeptide from UDP-MurNAc-pentapeptide onto the lipid carrier undecaprenyl phosphate, yielding undecaprenyl-pyrophosphoryl-MurNAc-pentapeptide, known as lipid I. The chain is Phospho-N-acetylmuramoyl-pentapeptide-transferase from Xanthomonas oryzae pv. oryzae (strain MAFF 311018).